Consider the following 159-residue polypeptide: Ribosomal RNA large subunit methyltransferase H (159 aa).

S-adenosyl-L-methionine-binding positions include L76, G108, and 127-132 (FSKMTF).

The protein belongs to the RNA methyltransferase RlmH family. In terms of assembly, homodimer.

It is found in the cytoplasm. The enzyme catalyses pseudouridine(1915) in 23S rRNA + S-adenosyl-L-methionine = N(3)-methylpseudouridine(1915) in 23S rRNA + S-adenosyl-L-homocysteine + H(+). In terms of biological role, specifically methylates the pseudouridine at position 1915 (m3Psi1915) in 23S rRNA. This Staphylococcus aureus (strain MSSA476) protein is Ribosomal RNA large subunit methyltransferase H.